The sequence spans 474 residues: Cysteine--tRNA ligase (474 aa).

A Zn(2+)-binding site is contributed by cysteine 27. Residues 29 to 39 (PTVYNYIHIGN) carry the 'HIGH' region motif. Zn(2+) is bound by residues cysteine 212, histidine 237, and glutamate 241. Residues 271 to 275 (KMSKS) carry the 'KMSKS' region motif. Lysine 274 lines the ATP pocket.

It belongs to the class-I aminoacyl-tRNA synthetase family. Monomer. Requires Zn(2+) as cofactor.

Its subcellular location is the cytoplasm. It carries out the reaction tRNA(Cys) + L-cysteine + ATP = L-cysteinyl-tRNA(Cys) + AMP + diphosphate. In Lactobacillus delbrueckii subsp. bulgaricus (strain ATCC BAA-365 / Lb-18), this protein is Cysteine--tRNA ligase.